The primary structure comprises 140 residues: uncharacterized protein (140 aa).

This is an uncharacterized protein from Homo sapiens (Human).